We begin with the raw amino-acid sequence, 481 residues long: MITIEQLLDILKKDHNFREVLDADGYHYHYQGLSFERLSYDSRQVDGKTLFFAKGATFKADYLKEAITNGLQLYISEVDYELGIPVVLVTDIKKAMSLIAMAFYGNPQEKLKLLAFTGTKGKTTAAYFAYHMLKESYKPAMFSTMNTTLDGKTFFKSQLTTPESLDLFAMMAECVTNGMTHLIMEVSSQAYLVDRVYGLTFDVGVFLNISPDHIGPIEHPTFEDYFYHKRLLMENSRAVVINSGMDHFSFLADQVADQEHVFYGPLSDNQITTSQAFSFEAKGQLAGHYDIQLIGHFNQENAMAAGLACLRLGASLADIQKGIAKTRVPGRMEVLTMTNHAKVFVDYAHNGDSLEKLLSVVEEHQTGKLMLILGAPGNKGESRRADFGRVIHQHPNLTVILTADDPNFEDPEDISKEIASHIARPVEIISDREQAIQKAMSLCQGAKDAVIIAGKGADAYQIVKGQQVAYAGDLAIAKHYL.

Serine 42 lines the UDP-N-acetyl-alpha-D-muramoyl-L-alanyl-D-glutamate pocket. 118-124 (GTKGKTT) serves as a coordination point for ATP. UDP-N-acetyl-alpha-D-muramoyl-L-alanyl-D-glutamate-binding positions include glutamine 158, 160–161 (TT), serine 187, and arginine 195. N6-carboxylysine is present on lysine 229. The L-lysine recognition motif motif lies at 404–407 (DDPN).

Belongs to the MurCDEF family. MurE subfamily. In terms of processing, carboxylation is probably crucial for Mg(2+) binding and, consequently, for the gamma-phosphate positioning of ATP.

It localises to the cytoplasm. The enzyme catalyses UDP-N-acetyl-alpha-D-muramoyl-L-alanyl-D-glutamate + L-lysine + ATP = UDP-N-acetyl-alpha-D-muramoyl-L-alanyl-gamma-D-glutamyl-L-lysine + ADP + phosphate + H(+). The protein operates within cell wall biogenesis; peptidoglycan biosynthesis. Functionally, catalyzes the addition of L-lysine to the nucleotide precursor UDP-N-acetylmuramoyl-L-alanyl-D-glutamate (UMAG) in the biosynthesis of bacterial cell-wall peptidoglycan. This chain is UDP-N-acetylmuramoyl-L-alanyl-D-glutamate--L-lysine ligase, found in Streptococcus pyogenes serotype M18 (strain MGAS8232).